Reading from the N-terminus, the 44-residue chain is uncharacterized protein (44 aa).

This is an uncharacterized protein from Bacillus phage phi105 (Bacteriophage phi-105).